Reading from the N-terminus, the 60-residue chain is Pepsin A (60 aa).

Residues 1–45 (FIIKVPLVKKKSLRKNLKEHGLLKDFLKKHSPNPASKYFPQEAAV) constitute a propeptide, activation peptide.

This sequence belongs to the peptidase A1 family.

The protein resides in the secreted. The enzyme catalyses Preferential cleavage: hydrophobic, preferably aromatic, residues in P1 and P1' positions. Cleaves 1-Phe-|-Val-2, 4-Gln-|-His-5, 13-Glu-|-Ala-14, 14-Ala-|-Leu-15, 15-Leu-|-Tyr-16, 16-Tyr-|-Leu-17, 23-Gly-|-Phe-24, 24-Phe-|-Phe-25 and 25-Phe-|-Tyr-26 bonds in the B chain of insulin.. In terms of biological role, shows particularly broad specificity; although bonds involving phenylalanine and leucine are preferred, many others are also cleaved to some extent. The polypeptide is Pepsin A (PGA) (Ursus thibetanus (Asiatic black bear)).